Consider the following 446-residue polypeptide: Coiled-coil domain-containing protein 112 (446 aa).

Coiled-coil stretches lie at residues 23 to 116 (LEEL…RKID) and 219 to 400 (ERKK…NVSR). 2 disordered regions span residues 247-277 (NNTP…AVEA) and 394-430 (VENN…LLHI). Positions 255-268 (NKPEDNQKQKEEQR) are enriched in basic and acidic residues.

It localises to the cytoplasm. Its subcellular location is the cytoskeleton. It is found in the microtubule organizing center. The protein localises to the centrosome. The protein resides in the centriolar satellite. The chain is Coiled-coil domain-containing protein 112 (CCDC112) from Macaca fascicularis (Crab-eating macaque).